Consider the following 274-residue polypeptide: Large ribosomal subunit protein uL2 (274 aa).

The disordered stretch occupies residues 221-256; the sequence is RGTAMNPVDHPHGGGEGRNFGKHPVTPWGVPTKGYK.

This sequence belongs to the universal ribosomal protein uL2 family. In terms of assembly, part of the 50S ribosomal subunit. Forms a bridge to the 30S subunit in the 70S ribosome.

In terms of biological role, one of the primary rRNA binding proteins. Required for association of the 30S and 50S subunits to form the 70S ribosome, for tRNA binding and peptide bond formation. It has been suggested to have peptidyltransferase activity; this is somewhat controversial. Makes several contacts with the 16S rRNA in the 70S ribosome. The sequence is that of Large ribosomal subunit protein uL2 from Hahella chejuensis (strain KCTC 2396).